Consider the following 637-residue polypeptide: 1-deoxy-D-xylulose-5-phosphate synthase (637 aa).

Thiamine diphosphate-binding positions include histidine 71 and 112 to 114; that span reads SHA. Mg(2+) is bound at residue aspartate 144. Thiamine diphosphate is bound by residues 145 to 146, asparagine 173, tyrosine 284, and glutamate 365; that span reads GA. Asparagine 173 lines the Mg(2+) pocket.

The protein belongs to the transketolase family. DXPS subfamily. As to quaternary structure, homodimer. It depends on Mg(2+) as a cofactor. The cofactor is thiamine diphosphate.

The enzyme catalyses D-glyceraldehyde 3-phosphate + pyruvate + H(+) = 1-deoxy-D-xylulose 5-phosphate + CO2. Its pathway is metabolic intermediate biosynthesis; 1-deoxy-D-xylulose 5-phosphate biosynthesis; 1-deoxy-D-xylulose 5-phosphate from D-glyceraldehyde 3-phosphate and pyruvate: step 1/1. In terms of biological role, catalyzes the acyloin condensation reaction between C atoms 2 and 3 of pyruvate and glyceraldehyde 3-phosphate to yield 1-deoxy-D-xylulose-5-phosphate (DXP). The protein is 1-deoxy-D-xylulose-5-phosphate synthase of Mycobacterium ulcerans (strain Agy99).